A 137-amino-acid polypeptide reads, in one-letter code: Large-conductance mechanosensitive channel (137 aa).

2 helical membrane-spanning segments follow: residues 10-30 and 76-96; these read FAMRGNVVDLAVGVIIGAAFG and GAFIQNIFDFVIVAFAIFMAI.

It belongs to the MscL family. As to quaternary structure, homopentamer.

Its subcellular location is the cell inner membrane. Functionally, channel that opens in response to stretch forces in the membrane lipid bilayer. May participate in the regulation of osmotic pressure changes within the cell. This Pectobacterium carotovorum subsp. carotovorum (strain PC1) protein is Large-conductance mechanosensitive channel.